The chain runs to 873 residues: Kinase suppressor of Ras 1 (873 aa).

3 disordered regions span residues M1–A24, E174–S230, and L251–K281. The interval M1 to G170 is mediates association with membranes. A compositionally biased stretch (polar residues) spans A206 to V216. A phosphothreonine mark is found at T256 and T260. At S297 the chain carries Phosphoserine; by MARK3. S320 carries the phosphoserine modification. The segment at T333–C377 adopts a Phorbol-ester/DAG-type zinc-finger fold. Residue H334 coordinates Zn(2+). At S337 the chain carries Phosphoserine. Residues C346, C349, C359, C362, H367, C370, and C377 each coordinate Zn(2+). Position 392 is a phosphoserine; by MARK3 (S392). Position 411 is a phosphothreonine (T411). Disordered stretches follow at residues L416–F473 and H506–R544. The span at S429 to T458 shows a compositional bias: low complexity. Over residues H506–E519 the composition is skewed to basic and acidic residues. Residue S518 is modified to Phosphoserine. Over residues A520–D530 the composition is skewed to acidic residues. Positions V563–L833 constitute a Protein kinase domain. I569–V577 is a binding site for ATP. Catalysis depends on D683, which acts as the Proton acceptor. Positions 685 and 700 each coordinate ATP. A Phosphoserine modification is found at S838.

The protein belongs to the protein kinase superfamily. TKL Ser/Thr protein kinase family. In terms of assembly, homodimer. Heterodimerizes (via N-terminus) with BRAF (via N-terminus) in a MAP2K1/MEK1 or MAP2K2/MEK2-dependent manner. Interacts with MAP2K1/MEK1 and MAP2K2/MEK2. Binding to MAP2K1/MEK1 releases the intramolecular inhibitory interaction between KSR1 N-terminus and kinase domains which is required for the subsequent RSK1 dimerization with BRAF. Identified in a complex with AKAP13, MAP2K1 and BRAF. Interacts with AKAP13 and BRAF. Interacts with RAF and MAPK/ERK, in a Ras-dependent manner. Interacts with 14-3-3 proteins including YWHAB. Interacts with HSP90AA1/HSP90, YWHAE/14-3-3 and CDC37. The binding of 14-3-3 proteins to phosphorylated KSR1 prevents the membrane localization. Interacts with MARK3/C-TAK1. Interacts with PPP2R1A and PPP2CA. Interacts with VRK2. Post-translationally, phosphorylated on Ser-297 and, to a higher extent, on Ser-392 by MARK3. Dephosphorylated on Ser-392 by PPP2CA. Phosphorylated KSR1 is cytoplasmic and dephosphorylated KSR1 is membrane-associated. Phosphorylated by PKA at Ser-838. Phosphorylation at Ser-838 is required for cAMP-dependent activation of MAPK1 and/or MAPK3. In terms of tissue distribution, expressed in brain, spleen and testis. Isoform 1 is highly expressed spleen and weakly in testis, and isoform 2 is highly expressed in brain and weakly in testis.

The protein localises to the cytoplasm. The protein resides in the membrane. It localises to the cell membrane. Its subcellular location is the cell projection. It is found in the ruffle membrane. The protein localises to the endoplasmic reticulum membrane. The enzyme catalyses L-seryl-[protein] + ATP = O-phospho-L-seryl-[protein] + ADP + H(+). The catalysed reaction is L-threonyl-[protein] + ATP = O-phospho-L-threonyl-[protein] + ADP + H(+). In terms of biological role, part of a multiprotein signaling complex which promotes phosphorylation of Raf family members and activation of downstream MAP kinases. Independently of its kinase activity, acts as MAP2K1/MEK1 and MAP2K2/MEK2-dependent allosteric activator of BRAF; upon binding to MAP2K1/MEK1 or MAP2K2/MEK2, dimerizes with BRAF and promotes BRAF-mediated phosphorylation of MAP2K1/MEK1 and/or MAP2K2/MEK2. Promotes activation of MAPK1 and/or MAPK3, both in response to EGF and to cAMP. Its kinase activity is unsure. Some protein kinase activity has been detected in vitro, however the physiological relevance of this activity is unknown. This Mus musculus (Mouse) protein is Kinase suppressor of Ras 1 (Ksr1).